Here is a 595-residue protein sequence, read N- to C-terminus: Elongation factor 4 (595 aa).

The region spanning 2–184 (KNIRNFSIIA…QIVEKIPAPK (183 aa)) is the tr-type G domain. GTP is bound by residues 14 to 19 (DHGKST) and 131 to 134 (NKID).

This sequence belongs to the TRAFAC class translation factor GTPase superfamily. Classic translation factor GTPase family. LepA subfamily.

It is found in the cell inner membrane. The catalysed reaction is GTP + H2O = GDP + phosphate + H(+). Required for accurate and efficient protein synthesis under certain stress conditions. May act as a fidelity factor of the translation reaction, by catalyzing a one-codon backward translocation of tRNAs on improperly translocated ribosomes. Back-translocation proceeds from a post-translocation (POST) complex to a pre-translocation (PRE) complex, thus giving elongation factor G a second chance to translocate the tRNAs correctly. Binds to ribosomes in a GTP-dependent manner. This Ruthia magnifica subsp. Calyptogena magnifica protein is Elongation factor 4.